A 313-amino-acid polypeptide reads, in one-letter code: Proline iminopeptidase (313 aa).

In terms of domain architecture, AB hydrolase-1 spans 35 to 298; that stretch reads KPVVILHGGP…TPGAGHSAFE (264 aa). Serine 110 (nucleophile) is an active-site residue. Residue aspartate 266 is part of the active site. The active-site Proton donor is histidine 294.

The protein belongs to the peptidase S33 family.

It localises to the cytoplasm. The catalysed reaction is Release of N-terminal proline from a peptide.. Functionally, specifically catalyzes the removal of N-terminal proline residues from peptides. The chain is Proline iminopeptidase (pip) from Xylella fastidiosa (strain Temecula1 / ATCC 700964).